The following is a 64-amino-acid chain: MPKMKTNKGAAKRFKKTAGGIKYKHATKRHILTKRTTKNKRQLRPNALLPRCEVAAVVRMLPYA.

It belongs to the bacterial ribosomal protein bL35 family.

The polypeptide is Large ribosomal subunit protein bL35 (Vibrio campbellii (strain ATCC BAA-1116)).